Consider the following 1104-residue polypeptide: Protein transport protein SEC31 homolog B (1104 aa).

WD repeat units follow at residues 5–45 (KGVG…EIFK), 62–109 (PSSE…GSQP), 120–160 (VHKG…EPSH), 170–210 (ATQG…PIIN), 214–257 (SVRR…SPVR), 261–301 (GHQR…IVAE), and 304–344 (AGNN…RYGV). Threonine 526 carries the post-translational modification Phosphothreonine. Residues 527 to 562 (PVSTSAKDFMPSDTDFSTKGEETQEMQEEEEESSDP) are disordered. The segment covering 549 to 560 (TQEMQEEEEESS) has biased composition (acidic residues). One copy of the WD 8 repeat lies at 662–707 (TLCDALASKLMAAGNTLAAVLCYICAGNVDRTVEIWSRSLANERDG). 4 disordered regions span residues 782-811 (LSAE…PTQA), 851-874 (HQAQ…PSMR), 892-931 (QQPT…QYPN), and 952-994 (TPGV…SNVP). Composition is skewed to polar residues over residues 786-811 (PETN…PTQA), 863-874 (PAPTSNAQPSMR), and 892-908 (QQPT…SNNA). A compositionally biased stretch (low complexity) spans 959–977 (SVQPASPPTQQAAAQAAPA).

This sequence belongs to the WD repeat SEC31 family. As to quaternary structure, interacts with SEC13A and SEC13B.

The protein resides in the golgi apparatus. Its subcellular location is the endoplasmic reticulum. Required for protein transport from the endoplasmic reticulum to the Golgi apparatus. The chain is Protein transport protein SEC31 homolog B from Arabidopsis thaliana (Mouse-ear cress).